Consider the following 228-residue polypeptide: Endonuclease V (228 aa).

Positions 43 and 109 each coordinate Mg(2+).

It belongs to the endonuclease V family. Requires Mg(2+) as cofactor.

The protein localises to the cytoplasm. The enzyme catalyses Endonucleolytic cleavage at apurinic or apyrimidinic sites to products with a 5'-phosphate.. Its function is as follows. DNA repair enzyme involved in the repair of deaminated bases. Selectively cleaves double-stranded DNA at the second phosphodiester bond 3' to a deoxyinosine leaving behind the intact lesion on the nicked DNA. The chain is Endonuclease V from Dictyoglomus turgidum (strain DSM 6724 / Z-1310).